The sequence spans 459 residues: Serine--tRNA ligase (459 aa).

254–256 is a binding site for L-serine; that stretch reads TAE. ATP contacts are provided by residues 285 to 287 and Val301; that span reads RKE. Glu308 contributes to the L-serine binding site. 372-375 is a binding site for ATP; the sequence is EMVS. Residue Thr408 participates in L-serine binding.

Belongs to the class-II aminoacyl-tRNA synthetase family. Type-1 seryl-tRNA synthetase subfamily. In terms of assembly, homodimer. The tRNA molecule binds across the dimer.

Its subcellular location is the cytoplasm. It carries out the reaction tRNA(Ser) + L-serine + ATP = L-seryl-tRNA(Ser) + AMP + diphosphate + H(+). The enzyme catalyses tRNA(Sec) + L-serine + ATP = L-seryl-tRNA(Sec) + AMP + diphosphate + H(+). It participates in aminoacyl-tRNA biosynthesis; selenocysteinyl-tRNA(Sec) biosynthesis; L-seryl-tRNA(Sec) from L-serine and tRNA(Sec): step 1/1. In terms of biological role, catalyzes the attachment of serine to tRNA(Ser). Is also able to aminoacylate tRNA(Sec) with serine, to form the misacylated tRNA L-seryl-tRNA(Sec), which will be further converted into selenocysteinyl-tRNA(Sec). The sequence is that of Serine--tRNA ligase from Staphylothermus marinus (strain ATCC 43588 / DSM 3639 / JCM 9404 / F1).